We begin with the raw amino-acid sequence, 502 residues long: ATP synthase subunit alpha (502 aa).

Residues 117-139 form a disordered region; sequence GMGPVLTSKTRPIESPAPGVMDR. 169 to 176 contributes to the ATP binding site; it reads GDRQTGKT.

The protein belongs to the ATPase alpha/beta chains family. In terms of assembly, F-type ATPases have 2 components, CF(1) - the catalytic core - and CF(0) - the membrane proton channel. CF(1) has five subunits: alpha(3), beta(3), gamma(1), delta(1), epsilon(1). CF(0) has three main subunits: a(1), b(2) and c(9-12). The alpha and beta chains form an alternating ring which encloses part of the gamma chain. CF(1) is attached to CF(0) by a central stalk formed by the gamma and epsilon chains, while a peripheral stalk is formed by the delta and b chains.

It localises to the cell membrane. It carries out the reaction ATP + H2O + 4 H(+)(in) = ADP + phosphate + 5 H(+)(out). Functionally, produces ATP from ADP in the presence of a proton gradient across the membrane. The alpha chain is a regulatory subunit. This chain is ATP synthase subunit alpha, found in Bacillus licheniformis (strain ATCC 14580 / DSM 13 / JCM 2505 / CCUG 7422 / NBRC 12200 / NCIMB 9375 / NCTC 10341 / NRRL NRS-1264 / Gibson 46).